A 292-amino-acid chain; its full sequence is NAD kinase (292 aa).

Asp73 acts as the Proton acceptor in catalysis. NAD(+) is bound by residues 73–74, 147–148, His158, Arg175, Asp177, 188–193, and Gln247; these read DG, NE, and TAYSLS.

It belongs to the NAD kinase family. It depends on a divalent metal cation as a cofactor.

Its subcellular location is the cytoplasm. It catalyses the reaction NAD(+) + ATP = ADP + NADP(+) + H(+). In terms of biological role, involved in the regulation of the intracellular balance of NAD and NADP, and is a key enzyme in the biosynthesis of NADP. Catalyzes specifically the phosphorylation on 2'-hydroxyl of the adenosine moiety of NAD to yield NADP. This Shigella dysenteriae serotype 1 (strain Sd197) protein is NAD kinase.